Reading from the N-terminus, the 246-residue chain is Acetoacetate decarboxylase (246 aa).

Catalysis depends on Lys-116, which acts as the Schiff-base intermediate with acetoacetate.

The protein belongs to the ADC family.

The catalysed reaction is acetoacetate + H(+) = acetone + CO2. Catalyzes the conversion of acetoacetate to acetone and carbon dioxide. The sequence is that of Acetoacetate decarboxylase from Burkholderia vietnamiensis (strain G4 / LMG 22486) (Burkholderia cepacia (strain R1808)).